The sequence spans 205 residues: Inactive ribonuclease-like protein 9 (205 aa).

Positions 1 to 26 are cleaved as a signal peptide; sequence MMRTLITTHPLPLLLLPQQLLQPVQF. Intrachain disulfides connect cysteine 98–cysteine 153, cysteine 116–cysteine 168, and cysteine 123–cysteine 130. Residues asparagine 131 and asparagine 143 are each glycosylated (N-linked (GlcNAc...) asparagine).

It belongs to the pancreatic ribonuclease family.

The protein localises to the secreted. Its function is as follows. Does not exhibit any ribonuclease activity. The sequence is that of Inactive ribonuclease-like protein 9 (RNASE9) from Pan troglodytes (Chimpanzee).